A 339-amino-acid chain; its full sequence is Biotin synthase (339 aa).

The region spanning 55 to 282 (NAVQLSTLLS…KAVVRLSAGR (228 aa)) is the Radical SAM core domain. Residues C70, C74, and C77 each contribute to the [4Fe-4S] cluster site. The [2Fe-2S] cluster site is built by C114, C145, C205, and R277.

It belongs to the radical SAM superfamily. Biotin synthase family. Homodimer. Requires [4Fe-4S] cluster as cofactor. [2Fe-2S] cluster is required as a cofactor.

It carries out the reaction (4R,5S)-dethiobiotin + (sulfur carrier)-SH + 2 reduced [2Fe-2S]-[ferredoxin] + 2 S-adenosyl-L-methionine = (sulfur carrier)-H + biotin + 2 5'-deoxyadenosine + 2 L-methionine + 2 oxidized [2Fe-2S]-[ferredoxin]. The protein operates within cofactor biosynthesis; biotin biosynthesis; biotin from 7,8-diaminononanoate: step 2/2. Catalyzes the conversion of dethiobiotin (DTB) to biotin by the insertion of a sulfur atom into dethiobiotin via a radical-based mechanism. The chain is Biotin synthase from Burkholderia orbicola (strain MC0-3).